We begin with the raw amino-acid sequence, 321 residues long: Phospho-N-acetylmuramoyl-pentapeptide-transferase (321 aa).

The next 10 helical transmembrane spans lie at 1 to 21 (MIFV…PVLI), 50 to 70 (MGGL…IIFV), 76 to 96 (IILL…DDYI), 112 to 132 (FLAQ…FHLV), 140 to 160 (IPFT…IVFW), 176 to 196 (GLAT…SFVL), 200 to 220 (AIGI…PYNI), 225 to 245 (VFMG…ISIM), 250 to 270 (LSLI…MLQV), and 300 to 320 (VVTV…WIGV).

Belongs to the glycosyltransferase 4 family. MraY subfamily. Requires Mg(2+) as cofactor.

It is found in the cell membrane. The enzyme catalyses UDP-N-acetyl-alpha-D-muramoyl-L-alanyl-gamma-D-glutamyl-L-lysyl-D-alanyl-D-alanine + di-trans,octa-cis-undecaprenyl phosphate = Mur2Ac(oyl-L-Ala-gamma-D-Glu-L-Lys-D-Ala-D-Ala)-di-trans,octa-cis-undecaprenyl diphosphate + UMP. It participates in cell wall biogenesis; peptidoglycan biosynthesis. In terms of biological role, catalyzes the initial step of the lipid cycle reactions in the biosynthesis of the cell wall peptidoglycan: transfers peptidoglycan precursor phospho-MurNAc-pentapeptide from UDP-MurNAc-pentapeptide onto the lipid carrier undecaprenyl phosphate, yielding undecaprenyl-pyrophosphoryl-MurNAc-pentapeptide, known as lipid I. This Staphylococcus aureus (strain Mu50 / ATCC 700699) protein is Phospho-N-acetylmuramoyl-pentapeptide-transferase.